The chain runs to 179 residues: Cytochrome b6-f complex iron-sulfur subunit (179 aa).

The helical transmembrane segment at 21–43 (LLTFGTVTGVALGALYPVVKYFI) threads the bilayer. In terms of domain architecture, Rieske spans 61 to 162 (GNDVSLSKFL…ANTVDDKIIL (102 aa)). C108, H110, C126, and H129 together coordinate [2Fe-2S] cluster. A disulfide bond links C113 and C128.

This sequence belongs to the Rieske iron-sulfur protein family. The 4 large subunits of the cytochrome b6-f complex are cytochrome b6, subunit IV (17 kDa polypeptide, PetD), cytochrome f and the Rieske protein, while the 4 small subunits are PetG, PetL, PetM and PetN. The complex functions as a dimer. [2Fe-2S] cluster is required as a cofactor.

It localises to the cellular thylakoid membrane. It carries out the reaction 2 oxidized [plastocyanin] + a plastoquinol + 2 H(+)(in) = 2 reduced [plastocyanin] + a plastoquinone + 4 H(+)(out). In terms of biological role, component of the cytochrome b6-f complex, which mediates electron transfer between photosystem II (PSII) and photosystem I (PSI), cyclic electron flow around PSI, and state transitions. In Desmonostoc sp. (strain PCC 7906) (Nostoc sp. (strain PCC 7906)), this protein is Cytochrome b6-f complex iron-sulfur subunit.